The primary structure comprises 558 residues: S-layer protein (558 aa).

An N-terminal signal peptide occupies residues 1–28 (MAMSLKKIGAIAVGGAMVATALASGVAA). N112, N138, N158, N197, N226, N291, and N374 each carry an N-linked (GlcNAc...) asparagine glycan.

The protein belongs to the Mj S-layer protein family.

The protein localises to the secreted. It localises to the cell wall. Its subcellular location is the S-layer. S-layer protein. The S-layer is a paracrystalline mono-layered assembly of proteins which coat the surface of the cell. The polypeptide is S-layer protein (sla) (Methanocaldococcus jannaschii (strain ATCC 43067 / DSM 2661 / JAL-1 / JCM 10045 / NBRC 100440) (Methanococcus jannaschii)).